We begin with the raw amino-acid sequence, 424 residues long: Serpin-Z2A (424 aa).

Residues 370-394 are RCL; it reads GTEAAASTACTIRLLSMSYPEDFVA.

Belongs to the serpin family.

In terms of biological role, probable serine protease inhibitor. The chain is Serpin-Z2A from Oryza sativa subsp. japonica (Rice).